A 158-amino-acid chain; its full sequence is Endoribonuclease YbeY (158 aa).

3 residues coordinate Zn(2+): His-114, His-118, and His-124.

This sequence belongs to the endoribonuclease YbeY family. It depends on Zn(2+) as a cofactor.

The protein resides in the cytoplasm. Single strand-specific metallo-endoribonuclease involved in late-stage 70S ribosome quality control and in maturation of the 3' terminus of the 16S rRNA. The sequence is that of Endoribonuclease YbeY from Pasteurella multocida (strain Pm70).